A 459-amino-acid polypeptide reads, in one-letter code: Alcohol acyl transferase 1 allele GSa (459 aa).

Catalysis depends on proton acceptor residues H164 and N385.

This sequence belongs to the plant acyltransferase family. As to expression, highly expressed in the cortex and skin of ripe fruit.

The enzyme catalyses butan-1-ol + acetyl-CoA = butyl acetate + CoA. It carries out the reaction butan-1-ol + butanoyl-CoA = butyl butanoate + CoA. It catalyses the reaction butan-1-ol + hexanoyl-CoA = butyl hexanoate + CoA. The catalysed reaction is hexan-1-ol + butanoyl-CoA = hexyl butanoate + CoA. The enzyme catalyses hexan-1-ol + acetyl-CoA = hexyl acetate + CoA. It carries out the reaction 2-methylbutan-1-ol + butanoyl-CoA = 2-methylbutyl butanoate + CoA. It catalyses the reaction ethanol + butanoyl-CoA = ethyl butanoate + CoA. The catalysed reaction is hexanoyl-CoA + ethanol = ethyl hexanoate + CoA. Functionally, involved in the biosynthesis of volatile esters which confer ripe apple fruit flavor. Alcohol acyl transferase that can use a wide range of alcohols as substrate, including 2-methylbutanol, hexanol and ethanol, to produce esters such as butyl butanoate, butyl hexanoate, hexyl butanoate, ethyl butanoate and ethyl hexanoate and, to some extent, 2-methylbutyl acetate (2MBA), butyl acetate, hexyl acetate and 2-methylbutyl butanoate (2MBB). The polypeptide is Alcohol acyl transferase 1 allele GSa (Malus domestica (Apple)).